Consider the following 291-residue polypeptide: uncharacterized protein (291 aa).

Belongs to the pseudouridine synthase RluA family.

The catalysed reaction is a uridine in RNA = a pseudouridine in RNA. This is an uncharacterized protein from Synechocystis sp. (strain ATCC 27184 / PCC 6803 / Kazusa).